A 550-amino-acid chain; its full sequence is Chaperonin GroEL 2 (550 aa).

Residues 30 to 33 (TLGP), Lys51, 87 to 91 (DGTTT), Gly415, 480 to 482 (NAA), and Asp496 each bind ATP.

It belongs to the chaperonin (HSP60) family. Forms a cylinder of 14 subunits composed of two heptameric rings stacked back-to-back. Interacts with the co-chaperonin GroES.

It localises to the cytoplasm. The enzyme catalyses ATP + H2O + a folded polypeptide = ADP + phosphate + an unfolded polypeptide.. In terms of biological role, together with its co-chaperonin GroES, plays an essential role in assisting protein folding. The GroEL-GroES system forms a nano-cage that allows encapsulation of the non-native substrate proteins and provides a physical environment optimized to promote and accelerate protein folding. In Erythrobacter litoralis (strain HTCC2594), this protein is Chaperonin GroEL 2.